Consider the following 401-residue polypeptide: Sulfate adenylyltransferase (401 aa).

This sequence belongs to the sulfate adenylyltransferase family.

It carries out the reaction sulfate + ATP + H(+) = adenosine 5'-phosphosulfate + diphosphate. The protein operates within sulfur metabolism; hydrogen sulfide biosynthesis; sulfite from sulfate: step 1/3. The sequence is that of Sulfate adenylyltransferase from Alcanivorax borkumensis (strain ATCC 700651 / DSM 11573 / NCIMB 13689 / SK2).